Here is a 384-residue protein sequence, read N- to C-terminus: Carbamoyl phosphate synthase small chain (384 aa).

Residues 1 to 192 form a CPSase region; that stretch reads MPIAAAKPAL…FGPVAEQQGQ (192 aa). L-glutamine-binding residues include Ser51, Gly244, and Gly246. The Glutamine amidotransferase type-1 domain occupies 196–381; it reads TVVALDFGVK…VKLMRQQKAE (186 aa). Cys272 (nucleophile) is an active-site residue. Residues Met273, Gln276, Asn312, Gly314, and Phe315 each contribute to the L-glutamine site. Residues His354 and Glu356 contribute to the active site.

Belongs to the CarA family. As to quaternary structure, composed of two chains; the small (or glutamine) chain promotes the hydrolysis of glutamine to ammonia, which is used by the large (or ammonia) chain to synthesize carbamoyl phosphate. Tetramer of heterodimers (alpha,beta)4.

It catalyses the reaction hydrogencarbonate + L-glutamine + 2 ATP + H2O = carbamoyl phosphate + L-glutamate + 2 ADP + phosphate + 2 H(+). The enzyme catalyses L-glutamine + H2O = L-glutamate + NH4(+). It functions in the pathway amino-acid biosynthesis; L-arginine biosynthesis; carbamoyl phosphate from bicarbonate: step 1/1. The protein operates within pyrimidine metabolism; UMP biosynthesis via de novo pathway; (S)-dihydroorotate from bicarbonate: step 1/3. Its function is as follows. Small subunit of the glutamine-dependent carbamoyl phosphate synthetase (CPSase). CPSase catalyzes the formation of carbamoyl phosphate from the ammonia moiety of glutamine, carbonate, and phosphate donated by ATP, constituting the first step of 2 biosynthetic pathways, one leading to arginine and/or urea and the other to pyrimidine nucleotides. The small subunit (glutamine amidotransferase) binds and cleaves glutamine to supply the large subunit with the substrate ammonia. This is Carbamoyl phosphate synthase small chain from Synechocystis sp. (strain ATCC 27184 / PCC 6803 / Kazusa).